The sequence spans 236 residues: Ubiquinone biosynthesis O-methyltransferase (236 aa).

The S-adenosyl-L-methionine site is built by Arg39, Gly59, Asp80, and Met124.

It belongs to the methyltransferase superfamily. UbiG/COQ3 family.

The enzyme catalyses a 3-demethylubiquinol + S-adenosyl-L-methionine = a ubiquinol + S-adenosyl-L-homocysteine + H(+). The catalysed reaction is a 3-(all-trans-polyprenyl)benzene-1,2-diol + S-adenosyl-L-methionine = a 2-methoxy-6-(all-trans-polyprenyl)phenol + S-adenosyl-L-homocysteine + H(+). It participates in cofactor biosynthesis; ubiquinone biosynthesis. Its function is as follows. O-methyltransferase that catalyzes the 2 O-methylation steps in the ubiquinone biosynthetic pathway. This Shewanella putrefaciens (strain CN-32 / ATCC BAA-453) protein is Ubiquinone biosynthesis O-methyltransferase.